A 226-amino-acid polypeptide reads, in one-letter code: Uracil-DNA glycosylase (226 aa).

Aspartate 68 serves as the catalytic Proton acceptor.

The protein belongs to the uracil-DNA glycosylase (UDG) superfamily. UNG family.

The protein resides in the cytoplasm. It catalyses the reaction Hydrolyzes single-stranded DNA or mismatched double-stranded DNA and polynucleotides, releasing free uracil.. Functionally, excises uracil residues from the DNA which can arise as a result of misincorporation of dUMP residues by DNA polymerase or due to deamination of cytosine. In Mycobacteroides abscessus (strain ATCC 19977 / DSM 44196 / CCUG 20993 / CIP 104536 / JCM 13569 / NCTC 13031 / TMC 1543 / L948) (Mycobacterium abscessus), this protein is Uracil-DNA glycosylase.